Reading from the N-terminus, the 136-residue chain is 5-hydroxyisourate hydrolase (136 aa).

The first 20 residues, 1–20 (MKRYILATVIASLVAAPAMA), serve as a signal peptide directing secretion. 3 residues coordinate substrate: His31, Arg69, and Tyr133.

It belongs to the transthyretin family. 5-hydroxyisourate hydrolase subfamily. In terms of assembly, homotetramer.

Its subcellular location is the periplasm. The catalysed reaction is 5-hydroxyisourate + H2O = 5-hydroxy-2-oxo-4-ureido-2,5-dihydro-1H-imidazole-5-carboxylate + H(+). Its function is as follows. Catalyzes the hydrolysis of 5-hydroxyisourate (HIU) to 2-oxo-4-hydroxy-4-carboxy-5-ureidoimidazoline (OHCU). This chain is 5-hydroxyisourate hydrolase (hiuH), found in Salmonella typhimurium (strain LT2 / SGSC1412 / ATCC 700720).